A 136-amino-acid chain; its full sequence is MLAPKKQKFRKAHKGRVMSKAKAGMTLAFGSFGLKSIDGWRVTARQIEAGRKAATRCMKRQGRLWIRIFPDVPVSKKPAEVRMGKGKGAPEFFAVRVSPGRIMFEIEGVEENIALRALELASAKLPVRTRIVRRYE.

This sequence belongs to the universal ribosomal protein uL16 family. Part of the 50S ribosomal subunit.

Its function is as follows. Binds 23S rRNA and is also seen to make contacts with the A and possibly P site tRNAs. The polypeptide is Large ribosomal subunit protein uL16 (Rickettsia typhi (strain ATCC VR-144 / Wilmington)).